Reading from the N-terminus, the 614-residue chain is Phosphomethylpyrimidine synthase (614 aa).

Substrate-binding positions include Asn-226, Met-255, Tyr-284, His-320, 340 to 342 (SRG), 381 to 384 (DGLR), and Glu-420. His-424 serves as a coordination point for Zn(2+). Tyr-447 contributes to the substrate binding site. Zn(2+) is bound at residue His-488. Residues Cys-568, Cys-571, and Cys-576 each coordinate [4Fe-4S] cluster.

It belongs to the ThiC family. As to quaternary structure, homodimer. The cofactor is [4Fe-4S] cluster.

It catalyses the reaction 5-amino-1-(5-phospho-beta-D-ribosyl)imidazole + S-adenosyl-L-methionine = 4-amino-2-methyl-5-(phosphooxymethyl)pyrimidine + CO + 5'-deoxyadenosine + formate + L-methionine + 3 H(+). It functions in the pathway cofactor biosynthesis; thiamine diphosphate biosynthesis. Functionally, catalyzes the synthesis of the hydroxymethylpyrimidine phosphate (HMP-P) moiety of thiamine from aminoimidazole ribotide (AIR) in a radical S-adenosyl-L-methionine (SAM)-dependent reaction. This Acidovorax sp. (strain JS42) protein is Phosphomethylpyrimidine synthase.